The primary structure comprises 68 residues: uncharacterized protein (68 aa).

This is an uncharacterized protein from Bacillus subtilis (strain 168).